The primary structure comprises 356 residues: GATA zinc finger domain-containing protein 17 (356 aa).

Residues 91 to 119 are a coiled coil; it reads LKEFDALEASLNAELECLELQYSSDTSEL. Residues 158–188 are compositionally biased toward low complexity; it reads TASTSTSTPTNTTTTTTTTSNSLTKNNNSAL. Residues 158–294 are disordered; sequence TASTSTSTPT…DITEESKVKE (137 aa). The span at 206-228 shows a compositional bias: acidic residues; that stretch reads SSDDEEDDQKDDQDKDDSDEDNV. Low complexity predominate over residues 260 to 284; sequence TAITTTTTPITTTDSNIIGTTTTTD. A GATA-type zinc finger spans residues 304-331; sequence CYVCKVTETPYWRRGTDNGVVVDLCNEC.

The protein is GATA zinc finger domain-containing protein 17 (gtaQ) of Dictyostelium discoideum (Social amoeba).